The following is a 143-amino-acid chain: FAD synthase (143 aa).

ATP contacts are provided by residues 10-11 (TF), 15-18 (HPGH), and aspartate 93.

Belongs to the archaeal FAD synthase family. Homodimer. Requires a divalent metal cation as cofactor.

The enzyme catalyses FMN + ATP + H(+) = FAD + diphosphate. It participates in cofactor biosynthesis; FAD biosynthesis; FAD from FMN: step 1/1. Functionally, catalyzes the transfer of the AMP portion of ATP to flavin mononucleotide (FMN) to produce flavin adenine dinucleotide (FAD) coenzyme. This is FAD synthase from Haloterrigena turkmenica (strain ATCC 51198 / DSM 5511 / JCM 9101 / NCIMB 13204 / VKM B-1734 / 4k) (Halococcus turkmenicus).